We begin with the raw amino-acid sequence, 57 residues long: UPF0391 membrane protein XOO1885 (57 aa).

Transmembrane regions (helical) follow at residues 4–24 and 33–53; these read WAII…GGMA and FLFW…MTIA.

The protein belongs to the UPF0391 family.

It is found in the cell membrane. This Xanthomonas oryzae pv. oryzae (strain KACC10331 / KXO85) protein is UPF0391 membrane protein XOO1885.